We begin with the raw amino-acid sequence, 365 residues long: Phosphopantothenate--cysteine ligase CAB2 (365 aa).

The segment at 228–250 (QSGDNGKMGANNDTEGTTRTTPD) is disordered. Residues 238-248 (NNDTEGTTRTT) are compositionally biased toward polar residues.

Belongs to the PPC synthetase family. In terms of assembly, homodimer.

The protein localises to the cytoplasm. The protein resides in the nucleus. It carries out the reaction (R)-4'-phosphopantothenate + L-cysteine + CTP = N-[(R)-4-phosphopantothenoyl]-L-cysteine + CMP + diphosphate + H(+). The protein operates within cofactor biosynthesis; coenzyme A biosynthesis; CoA from (R)-pantothenate: step 2/5. Functionally, catalyzes the first step in the biosynthesis of coenzyme A from vitamin B5, where cysteine is conjugated to 4'-phosphopantothenate to form 4-phosphopantothenoylcysteine. In Saccharomyces cerevisiae (strain ATCC 204508 / S288c) (Baker's yeast), this protein is Phosphopantothenate--cysteine ligase CAB2 (CAB2).